The following is a 240-amino-acid chain: Pro-opiomelanocortin B (240 aa).

Positions 1 to 36 (MFGTFLQNQSVRLNMVCAPWLLAVVVVCVCNPGVEG) are cleaved as a signal peptide. The residue at position 37 (Q37) is a Pyrrolidone carboxylic acid. A propeptide is located at residue H111. Position 112 is an N-acetylserine; in Corticotropin (S112). The residue at position 124 (I124) is an Isoleucine amide.

Belongs to the POMC family. Specific enzymatic cleavages at paired basic residues yield the different active peptides. In terms of processing, acetylation of beta-endorphin occurs in a tissue-specific manner. Pituitary and hypothalamus of adult diploid animals.

The protein resides in the secreted. Its function is as follows. Stimulates the adrenal glands to release cortisol. Melanocyte-stimulating hormone alpha: Anorexigenic peptide. Increases the pigmentation of skin by increasing melanin production in melanocytes. Functionally, melanocyte-stimulating hormone beta: Increases the pigmentation of skin by increasing melanin production in melanocytes. In terms of biological role, beta-endorphin: Endogenous orexigenic opiate. Its function is as follows. Endogenous opiate. This Oncorhynchus mykiss (Rainbow trout) protein is Pro-opiomelanocortin B (pomcb).